A 126-amino-acid chain; its full sequence is Holo-[acyl-carrier-protein] synthase (126 aa).

Residues Asp-9 and Glu-58 each contribute to the Mg(2+) site.

It belongs to the P-Pant transferase superfamily. AcpS family. Mg(2+) serves as cofactor.

It is found in the cytoplasm. It carries out the reaction apo-[ACP] + CoA = holo-[ACP] + adenosine 3',5'-bisphosphate + H(+). Functionally, transfers the 4'-phosphopantetheine moiety from coenzyme A to a Ser of acyl-carrier-protein. In Aliivibrio salmonicida (strain LFI1238) (Vibrio salmonicida (strain LFI1238)), this protein is Holo-[acyl-carrier-protein] synthase.